A 215-amino-acid polypeptide reads, in one-letter code: Cytochrome b6 (215 aa).

The helical transmembrane segment at 32 to 52 (IFYCLGGITLTCFLVQVATGF) threads the bilayer. Cys-35 contacts heme c. The heme b site is built by His-86 and His-100. 3 helical membrane-spanning segments follow: residues 90-110 (ASMM…TGGF), 116-136 (LTWV…VTGY), and 186-206 (LHTF…FLMI). Heme b-binding residues include His-187 and His-202.

The protein belongs to the cytochrome b family. PetB subfamily. As to quaternary structure, the 4 large subunits of the cytochrome b6-f complex are cytochrome b6, subunit IV (17 kDa polypeptide, PetD), cytochrome f and the Rieske protein, while the 4 small subunits are PetG, PetL, PetM and PetN. The complex functions as a dimer. Heme b is required as a cofactor. The cofactor is heme c.

Its subcellular location is the plastid. It localises to the chloroplast thylakoid membrane. Its function is as follows. Component of the cytochrome b6-f complex, which mediates electron transfer between photosystem II (PSII) and photosystem I (PSI), cyclic electron flow around PSI, and state transitions. The chain is Cytochrome b6 from Pinus koraiensis (Korean pine).